A 1507-amino-acid chain; its full sequence is DE-cadherin (1507 aa).

The N-terminal stretch at 1–69 (MSTSVQRMSR…AISLLSPALA (69 aa)) is a signal peptide. A propeptide spanning residues 70–261 (LHSPPDKNFS…IYLKRPIDKR (192 aa)) is cleaved from the precursor. Cadherin domains follow at residues 97–195 (VKEE…APAF), 204–301 (MSEN…PPSF), 311–412 (LKEN…IPYY), 420–522 (ILEN…KPHF), 532–633 (LLED…TILE), 631–733 (ILEE…APFL), and 741–835 (WQEN…NDNA). At 262-1328 (PGQSYAIIVR…VAFSFGIDRN (1067 aa)) the chain is on the extracellular side. N-linked (GlcNAc...) asparagine glycosylation is found at Asn317, Asn466, and Asn552. 5 N-linked (GlcNAc...) asparagine glycosylation sites follow: Asn766, Asn949, Asn983, Asn999, and Asn1073. The region spanning 1084–1123 (VQAQCVCEAPLMRRCLNGGSPRYGENDVCDCIDGFTGPHC) is the EGF-like domain. Cystine bridges form between Cys1098-Cys1112 and Cys1114-Cys1123. Residues 1125-1313 (LVSVAFYGSG…SVFRNIDSGC (189 aa)) form the Laminin G-like domain. Residues Asn1145, Asn1274, and Asn1290 are each glycosylated (N-linked (GlcNAc...) asparagine). Cys1287 and Cys1313 are disulfide-bonded. The helical transmembrane segment at 1329–1349 (FIIAIIVCLALLLIILLAVVV) threads the bilayer. Residues 1350–1507 (QKKQKNGWHE…NVDDDQGWRI (158 aa)) lie on the Cytoplasmic side of the membrane. The segment at 1350 to 1507 (QKKQKNGWHE…NVDDDQGWRI (158 aa)) is interaction with Inx2. The interval 1488–1507 (YGEEPSDTDSNVDDDQGWRI) is disordered. Ser1493 bears the Phosphoserine mark.

In terms of assembly, interacts (via cytoplasmic region) with Inx2 (via cytoplasmic loop). Interacts with Hakai. Interacts with Myo31DF. Post-translationally, N-glycosylation is important for biosynthesis and function. In early stage 9 and stage 10 oocytes, expressed in border cells, strongly expressed in polar cells and very weakly expressed in the nurse cells (at protein level). In the embryo, expressed in the leading edge cells of the dorsal epidermis (at protein level). Stage 10 embryos exhibit intense expression in epithelial cells. Stage 14 embryos show expression in the hindgut (at the apical poles of cell-cell boundaries), at the apical junctions of tracheal cells and in the dorsal longitudinal trunk. In stage 16 embryos the glial midline cells of the central nervous system show strong expression.

It localises to the cell membrane. The protein resides in the apical cell membrane. Functionally, cadherins are calcium-dependent cell adhesion proteins. In connecting cells they preferentially interact with themselves in a homophilic manner; cadherins may thus contribute to the sorting of heterogeneous cell types. During oogenesis, integral component of the guidance mechanisms that regulate the directional persistent collective migration of the border cell (BC) cluster through the nurse cells to the oocyte. Functions downstream of the two chemoattractant receptors, Pvr and Egfr, to promote BC adhesion between the leader cells of the migrating cluster and the surrounding nurse cells. This adhesion increases Rac1 signaling in the leading cells, which in turn stabilizes DE-cadherin/DE-cadherin adhesions through the formation of forward-directed protrusions which attach/detach to the surrounding nurse cells in order to pull the cluster through the egg chamber to the oocyte. Within the BC cluster, also promotes adhesion between BCs, and between BCs and polar cells which enables the lead BC to communicate direction to the other cells in the cluster, providing polarity to each individual cell and ensuring collective behavior. May function in cell intercalation in the lateral epidermis during germband extension. Contributes to the determination of body left-right asymmetry by enhancing Myo31DF activity and inhibiting Myo61F activity. This chain is DE-cadherin, found in Drosophila melanogaster (Fruit fly).